The chain runs to 239 residues: Endonuclease V (239 aa).

Mg(2+) is bound by residues D50 and D118.

This sequence belongs to the endonuclease V family. Requires Mg(2+) as cofactor.

It is found in the cytoplasm. It catalyses the reaction Endonucleolytic cleavage at apurinic or apyrimidinic sites to products with a 5'-phosphate.. Functionally, DNA repair enzyme involved in the repair of deaminated bases. Selectively cleaves double-stranded DNA at the second phosphodiester bond 3' to a deoxyinosine leaving behind the intact lesion on the nicked DNA. The polypeptide is Endonuclease V (Xylella fastidiosa (strain Temecula1 / ATCC 700964)).